The sequence spans 328 residues: Lytic polysaccharide monooxygenase aasB (328 aa).

Positions 1–18 (MKAFFAISASTLLATVHG) are cleaved as a signal peptide. His-19 provides a ligand contact to Cu(2+). Cysteines 40 and 43 form a disulfide. The N-linked (GlcNAc...) asparagine glycan is linked to Asn-54. Cystine bridges form between Cys-66–Cys-245, Cys-102–Cys-203, Cys-118–Cys-145, Cys-153–Cys-161, Cys-167–Cys-173, and Cys-181–Cys-192. Cu(2+) is bound at residue His-109. Tyr-242 provides a ligand contact to Cu(2+). Residue Asn-306 is glycosylated (N-linked (GlcNAc...) asparagine).

The protein belongs to the polysaccharide monooxygenase AA13 family. Requires Cu(2+) as cofactor.

The protein localises to the secreted. It catalyses the reaction starch + reduced acceptor + O2 = D-glucono-1,5-lactone-terminated malto-oligosaccharides + short-chain malto-oligosaccharides + acceptor + H2O.. Its function is as follows. Lytic polysaccharide monooxygenase involved in breakdown of granular resistant starch. In Emericella nidulans (strain FGSC A4 / ATCC 38163 / CBS 112.46 / NRRL 194 / M139) (Aspergillus nidulans), this protein is Lytic polysaccharide monooxygenase aasB.